The following is a 461-amino-acid chain: Bifunctional protein GlmU (461 aa).

The pyrophosphorylase stretch occupies residues 1–234; it reads MSLSVVILAA…EIEVEGANNR (234 aa). UDP-N-acetyl-alpha-D-glucosamine-binding positions include 8–11, lysine 22, glutamine 77, 82–83, 104–106, glycine 141, glutamate 159, asparagine 174, and asparagine 232; these read LAAG, GT, and YGD. Residue aspartate 106 participates in Mg(2+) binding. Asparagine 232 is a binding site for Mg(2+). The linker stretch occupies residues 235-255; that stretch reads VQLATLERAYQARIAEELMIA. The interval 256 to 461 is N-acetyltransferase; sequence GASLRDPARI…AGWQRPVKKS (206 aa). Residues arginine 338 and lysine 356 each coordinate UDP-N-acetyl-alpha-D-glucosamine. The Proton acceptor role is filled by histidine 368. Positions 371 and 382 each coordinate UDP-N-acetyl-alpha-D-glucosamine. Acetyl-CoA contacts are provided by residues alanine 385, 391-392, serine 410, alanine 428, and arginine 445; that span reads NY.

This sequence in the N-terminal section; belongs to the N-acetylglucosamine-1-phosphate uridyltransferase family. In the C-terminal section; belongs to the transferase hexapeptide repeat family. In terms of assembly, homotrimer. The cofactor is Mg(2+).

It is found in the cytoplasm. It catalyses the reaction alpha-D-glucosamine 1-phosphate + acetyl-CoA = N-acetyl-alpha-D-glucosamine 1-phosphate + CoA + H(+). It carries out the reaction N-acetyl-alpha-D-glucosamine 1-phosphate + UTP + H(+) = UDP-N-acetyl-alpha-D-glucosamine + diphosphate. It participates in nucleotide-sugar biosynthesis; UDP-N-acetyl-alpha-D-glucosamine biosynthesis; N-acetyl-alpha-D-glucosamine 1-phosphate from alpha-D-glucosamine 6-phosphate (route II): step 2/2. It functions in the pathway nucleotide-sugar biosynthesis; UDP-N-acetyl-alpha-D-glucosamine biosynthesis; UDP-N-acetyl-alpha-D-glucosamine from N-acetyl-alpha-D-glucosamine 1-phosphate: step 1/1. The protein operates within bacterial outer membrane biogenesis; LPS lipid A biosynthesis. Functionally, catalyzes the last two sequential reactions in the de novo biosynthetic pathway for UDP-N-acetylglucosamine (UDP-GlcNAc). The C-terminal domain catalyzes the transfer of acetyl group from acetyl coenzyme A to glucosamine-1-phosphate (GlcN-1-P) to produce N-acetylglucosamine-1-phosphate (GlcNAc-1-P), which is converted into UDP-GlcNAc by the transfer of uridine 5-monophosphate (from uridine 5-triphosphate), a reaction catalyzed by the N-terminal domain. The chain is Bifunctional protein GlmU from Colwellia psychrerythraea (strain 34H / ATCC BAA-681) (Vibrio psychroerythus).